The sequence spans 857 residues: Autoinducer 2 sensor kinase/phosphatase LuxQ (857 aa).

A run of 2 helical transmembrane segments spans residues 20–40 and 283–303; these read IIFL…YYFS and LGLA…RSWI. Residues 490–712 form the Histidine kinase domain; the sequence is KMSHEIRTPL…TFYLSIPVEK (223 aa). Histidine 493 carries the post-translational modification Phosphohistidine; by autocatalysis. The 116-residue stretch at 735 to 850 folds into the Response regulatory domain; that stretch reads KVLLVEDNHT…ELHDELLHFK (116 aa). Aspartate 784 carries the post-translational modification 4-aspartylphosphate.

As to quaternary structure, binds the complex formed by the autoinducer and LuxP.

The protein resides in the cell inner membrane. The enzyme catalyses ATP + protein L-histidine = ADP + protein N-phospho-L-histidine.. In terms of biological role, at low cell density, in absence of autoinducer has a kinase activity, and autophosphorylates on a histidine residue. The phosphoryl group is then transferred to an aspartate residue in the response regulator domain. The phosphoryl group is transferred to LuxU, and ultimately to LuxO. At high cell density, in the presence of autoinducer, the kinase activity is inactivated, and the response regulator domain has a phosphatase activity. The sequence is that of Autoinducer 2 sensor kinase/phosphatase LuxQ (luxQ) from Vibrio vulnificus (strain YJ016).